The primary structure comprises 733 residues: MPPINEPTATTTSASSVWQGMTQLKSQVDLINIARGILSTPATTSTSCLDIQNSTPIIGSLASGKSQTPILTATMTPQIGLTGLGSLTSLPPELLLQFARLDGFNLLPAVGSPAIPSSSSCSEPSTSQASTVVSAPTLPPPSPLTSLPQKPAPLMPSGHVTTVDQQNRQQHQQQQRQQQQAQQQNSMARKYSMDTIQHHTMQHPHQLQYIPNHFMTASTDVFAAMDMSQKQSSPPGIFKIVAAKNEPSSSSNSQPGTPAMGDRRAVPACAICGTDSTGIHFGVDACAACSAFFRRTVVLNKDYSCNKGGKCTVVKDGSAGQKCRACRFRKCISSGMDKNSVQHRRDAIGKYSAGVKRELSPDAEFEPSAKVSTVSEPSTSSGPSGGFNQNVSSPAGIPRVPSTLRTTQASTCMNSACGQKSVLHELICRQNFLTEQRQLFYAGCLGDWFRKPSSIENQTLSELTDFSSCMFHLWKIEPRLAADFMNRNRYLDPLPIVEKLKIYRNFVIMRQSVEEPYLTWRHGGLEKRWFVMPNNTYIDFNNIAKYFENGALKDLKLDYETTTNLFLPSFTHAMDTIGEKMKKNNITETELTILLGLVLLDPGIYGIHESTRKFLKRIRDQLIHDVYMYYEDEMSHLYDPEIRMADIFMLVAAIKIHSIKTSENMHMLRVFDLIPADACFNQMLDVESVNVSPDGQKDSEAEQGPSPVSVPEAARGSYQDDDMPPVLEKNCDL.

Low complexity-rich tracts occupy residues 113-130 (PAIP…SQAS) and 165-185 (QQNR…QQQN). The interval 113–190 (PAIPSSSSCS…AQQQNSMARK (78 aa)) is disordered. Residues 266 to 343 (VPACAICGTD…SGMDKNSVQH (78 aa)) constitute a DNA-binding region (nuclear receptor). NR C4-type zinc fingers lie at residues 269-289 (CAIC…CAAC) and 305-326 (CNKG…CRAC). Residues 361–396 (PDAEFEPSAKVSTVSEPSTSSGPSGGFNQNVSSPAG) are disordered. A compositionally biased stretch (low complexity) spans 371-382 (VSTVSEPSTSSG). Residues 444-687 (CLGDWFRKPS…ACFNQMLDVE (244 aa)) form the NR LBD domain. An AF-2 region spans residues 676–687 (ADACFNQMLDVE). Residues 691–733 (VSPDGQKDSEAEQGPSPVSVPEAARGSYQDDDMPPVLEKNCDL) form a disordered region.

It belongs to the nuclear hormone receptor family. Interacts with nuclear hormone receptor nhr-49; the interaction is direct. As to expression, widely expressed, including in hypodermis, gut, muscle, and neuronal cells of the ventral nerve cord, head, and tail ganglia. Expressed in the head ganglion in several sensory and interneurons, including AVA.

It is found in the nucleus. Transcription factor. Binds to regulatory elements and regulates transcription of target genes, including the potassium channel accessory subunit mps-2. Negatively regulates transcription of mps-2, thereby modulating age-dependent memory decline. In concert with nuclear hormone receptor nhr-49, involved in regulating target genes with roles in sphingolipid breakdown and lipid remodeling. Plays a role in modulating mitochondrial morphology and function. In Caenorhabditis elegans, this protein is Nuclear hormone receptor family member nhr-66.